Reading from the N-terminus, the 487-residue chain is Glutamyl-tRNA(Gln) amidotransferase subunit A (487 aa).

Catalysis depends on charge relay system residues lysine 76 and serine 151. Catalysis depends on serine 175, which acts as the Acyl-ester intermediate.

Belongs to the amidase family. GatA subfamily. As to quaternary structure, heterotrimer of A, B and C subunits.

The catalysed reaction is L-glutamyl-tRNA(Gln) + L-glutamine + ATP + H2O = L-glutaminyl-tRNA(Gln) + L-glutamate + ADP + phosphate + H(+). Functionally, allows the formation of correctly charged Gln-tRNA(Gln) through the transamidation of misacylated Glu-tRNA(Gln) in organisms which lack glutaminyl-tRNA synthetase. The reaction takes place in the presence of glutamine and ATP through an activated gamma-phospho-Glu-tRNA(Gln). This chain is Glutamyl-tRNA(Gln) amidotransferase subunit A, found in Azoarcus sp. (strain BH72).